A 129-amino-acid polypeptide reads, in one-letter code: Large ribosomal subunit protein eL32 (129 aa).

It belongs to the eukaryotic ribosomal protein eL32 family.

This chain is Large ribosomal subunit protein eL32 (rpl32e), found in Methanosarcina acetivorans (strain ATCC 35395 / DSM 2834 / JCM 12185 / C2A).